We begin with the raw amino-acid sequence, 196 residues long: Shikimate kinase (196 aa).

Residue 32 to 37 (GAGKSA) participates in ATP binding. S36 is a Mg(2+) binding site. 3 residues coordinate substrate: D54, R78, and G100. R138 contributes to the ATP binding site. A substrate-binding site is contributed by R157. Residue R174 coordinates ATP.

Belongs to the shikimate kinase family. In terms of assembly, monomer. It depends on Mg(2+) as a cofactor.

The protein resides in the cytoplasm. The enzyme catalyses shikimate + ATP = 3-phosphoshikimate + ADP + H(+). It functions in the pathway metabolic intermediate biosynthesis; chorismate biosynthesis; chorismate from D-erythrose 4-phosphate and phosphoenolpyruvate: step 5/7. Catalyzes the specific phosphorylation of the 3-hydroxyl group of shikimic acid using ATP as a cosubstrate. The sequence is that of Shikimate kinase from Rhizobium leguminosarum bv. trifolii (strain WSM2304).